Reading from the N-terminus, the 351-residue chain is Rab9 effector protein with kelch motifs (351 aa).

Kelch repeat units lie at residues 54-102, 105-156, 162-210, 214-263, 264-313, and 328-351; these read KIVI…PESE, SLWV…TNSA, LFVF…VITA, DIYI…TFNK, NIFI…LLPW, and LCFVFGGMDTQGVIFNDCLVTVLT.

Rab9 effector required for endosome to trans-Golgi network (TGN) transport. The protein is Rab9 effector protein with kelch motifs (rabepk) of Danio rerio (Zebrafish).